Consider the following 87-residue polypeptide: MSTSVPQGHTWTQRVKKDDEEEDPLDQLISRSGCAASHFAVQECMAQHQDWRQCQPQVQAFKDCMSEQQARRQEELQRRQEQAGAHH.

The span at 1-13 (MSTSVPQGHTWTQ) shows a compositional bias: polar residues. A disordered region spans residues 1 to 25 (MSTSVPQGHTWTQRVKKDDEEEDPL). The CHCH domain maps to 31-72 (RSGCAASHFAVQECMAQHQDWRQCQPQVQAFKDCMSEQQARR). Short sequence motifs (cx9C motif) lie at residues 34 to 44 (CAASHFAVQEC) and 54 to 64 (CQPQVQAFKDC). 2 cysteine pairs are disulfide-bonded: Cys-34-Cys-64 and Cys-44-Cys-54. Positions 68 to 87 (QQARRQEELQRRQEQAGAHH) are disordered. The span at 69 to 81 (QARRQEELQRRQE) shows a compositional bias: basic and acidic residues.

The protein belongs to the COA4 family.

Its subcellular location is the mitochondrion. Putative COX assembly factor. The polypeptide is Cytochrome c oxidase assembly factor 4 homolog, mitochondrial (COA4) (Homo sapiens (Human)).